Consider the following 1841-residue polypeptide: Cell division control protein 12 (1841 aa).

Composition is skewed to polar residues over residues 1–25 and 46–63; these read MRNS…TPSA and SIES…QSVT. 3 disordered regions span residues 1–63, 78–134, and 152–181; these read MRNS…QSVT, NSHN…GPRL, and PPVH…RTKH. One can recognise a GBD/FH3 domain in the interval 232 to 620; it reads TRPPSLDQLI…RILLNSKVSN (389 aa). Positions 674-715 form a coiled coil; it reads LGAEDLIAKLNKEVEDQKDVILSQKRTNETLKTEIDALQKSH. The region spanning 740 to 972 is the FH1 domain; it reads GSTNSKERII…VSPAVSNNIS (233 aa). The region spanning 980–1391 is the FH2 domain; sequence TGLTRRPTRR…QHRRLNLVNN (412 aa). Residues 1260-1290 are a coiled coil; sequence TEAAKLNIEAIEQECSELIRGCQNLQIDCDS. 3 disordered regions span residues 1445–1661, 1696–1715, and 1735–1758; these read EAPN…ENNL, TTTT…INTI, and KSNK…GSNK. Polar residues-rich tracts occupy residues 1447 to 1456 and 1483 to 1497; these read PNTSTKSSPA and SEST…NITP. Basic and acidic residues predominate over residues 1499 to 1516; sequence KKGEVSSKAKKGYNYEKR. Over residues 1539–1553 the composition is skewed to polar residues; that stretch reads GRSASYTFSDPSSLE. Phosphoserine is present on serine 1541. Position 1544 is a phosphotyrosine (tyrosine 1544). The span at 1554–1567 shows a compositional bias: basic and acidic residues; it reads DSNRQKPFNGEKFR. Basic residues predominate over residues 1568 to 1577; that stretch reads RFSSKSRRGS. Residues 1594–1604 show a composition bias toward polar residues; it reads INNNQTSPQNK. The segment covering 1605–1621 has biased composition (basic and acidic residues); it reads PSKESLKSDTISNEKKV. The span at 1630 to 1641 shows a compositional bias: polar residues; sequence NLLTPTISNGTR.

It belongs to the formin homology family. BNI1 subfamily. Interacts with profilin and actin at the FH1 and FH2 domains respectively.

It localises to the nucleus. Plays a role in the cell cycle. Involved in cytokinesis. Component of the cell division ring. In the absence of profilin, caps the barbed end of actin filaments, thus preventing subunit addition and dissociation. In the presence of profilin, nucleates actin filaments that grow rapidly from their barbed ends. The protein is Cell division control protein 12 (cdc12) of Schizosaccharomyces pombe (strain 972 / ATCC 24843) (Fission yeast).